A 364-amino-acid polypeptide reads, in one-letter code: Protein Wnt-6 (364 aa).

The first 23 residues, 1–23 (MLPPVPSRLGLLLLLLCPAHVDG), serve as a signal peptide directing secretion. Disulfide bonds link Cys75-Cys86, Cys123-Cys131, Cys133-Cys171, Cys221-Cys235, Cys223-Cys230, Cys293-Cys324, Cys309-Cys319, Cys323-Cys363, Cys339-Cys354, Cys341-Cys351, and Cys346-Cys347. Asn85 carries N-linked (GlcNAc...) asparagine glycosylation. The segment at 140–162 (APPRPSGLLGTPGPPGPTGSPDA) is disordered. Ser227 carries O-palmitoleoyl serine; by PORCN lipidation. N-linked (GlcNAc...) asparagine glycosylation occurs at Asn310.

It belongs to the Wnt family. As to quaternary structure, interacts with PORCN. Post-translationally, palmitoleoylation is required for efficient binding to frizzled receptors. Depalmitoleoylation leads to Wnt signaling pathway inhibition. As to expression, detected in ileum, colon and stomach (at protein level).

It localises to the secreted. It is found in the extracellular space. The protein localises to the extracellular matrix. Ligand for members of the frizzled family of seven transmembrane receptors. Probable developmental protein. May be a signaling molecule which affects the development of discrete regions of tissues. Is likely to signal over only few cell diameters. This Mus musculus (Mouse) protein is Protein Wnt-6 (Wnt6).